A 201-amino-acid polypeptide reads, in one-letter code: Potassium-transporting ATPase KdpC subunit (201 aa).

A helical membrane pass occupies residues 7-27 (PAIVLLLVLTAITGLAYPLAM).

It belongs to the KdpC family. The system is composed of three essential subunits: KdpA, KdpB and KdpC.

It localises to the cell inner membrane. Functionally, part of the high-affinity ATP-driven potassium transport (or Kdp) system, which catalyzes the hydrolysis of ATP coupled with the electrogenic transport of potassium into the cytoplasm. This subunit acts as a catalytic chaperone that increases the ATP-binding affinity of the ATP-hydrolyzing subunit KdpB by the formation of a transient KdpB/KdpC/ATP ternary complex. The polypeptide is Potassium-transporting ATPase KdpC subunit (Bradyrhizobium diazoefficiens (strain JCM 10833 / BCRC 13528 / IAM 13628 / NBRC 14792 / USDA 110)).